The sequence spans 126 residues: Large ribosomal subunit protein eL32 (126 aa).

This sequence belongs to the eukaryotic ribosomal protein eL32 family.

The protein is Large ribosomal subunit protein eL32 of Thermococcus onnurineus (strain NA1).